Here is a 500-residue protein sequence, read N- to C-terminus: Glycogen synthase (500 aa).

Lys20 contacts ADP-alpha-D-glucose.

Belongs to the glycosyltransferase 1 family. Bacterial/plant glycogen synthase subfamily.

It carries out the reaction [(1-&gt;4)-alpha-D-glucosyl](n) + ADP-alpha-D-glucose = [(1-&gt;4)-alpha-D-glucosyl](n+1) + ADP + H(+). Its pathway is glycan biosynthesis; glycogen biosynthesis. Functionally, synthesizes alpha-1,4-glucan chains using ADP-glucose. This Desulforudis audaxviator (strain MP104C) protein is Glycogen synthase.